The sequence spans 1099 residues: Sterol regulatory element-binding protein 2 (1099 aa).

The transcriptional activation (acidic) stretch occupies residues 1–47 (MDASEFMDTMDPSLSELGDEFTLGDIDEMLQFVSNQVDFPDIFEDQM). Over 1 to 461 (MDASEFMDTM…SCVGVMDRSR (461 aa)) the chain is Cytoplasmic. The interval 65–107 (LTPPHTPVQTSSQTHTQTLTQAHTQTHTQTHTQTRTPPVLQPR) is disordered. Residues 71-100 (PVQTSSQTHTQTLTQAHTQTHTQTHTQTRT) show a composition bias toward low complexity. In terms of domain architecture, bHLH spans 320–370 (ERRTTHNIIEKRYRSSINDKILELRDLVLGNDAKMHKSGVLRKAIDYIKYL). The segment at 370 to 391 (LQQVNHKLRQENLTLKMANQKN) is leucine-zipper. A helical transmembrane segment spans residues 462-482 (LLLCALSFLCLSLNPLPSLLG). Residues 483 to 513 (AEAPAGSPEVAGHGPTRTLFSLPAQTQSFGA) are Lumenal-facing. The chain crosses the membrane as a helical span at residues 514–534 (WLWCVLPFLLVWVVSGVGVVW). Over 535–1099 (GCVRVLYLWE…LSGGTTIAAS (565 aa)) the chain is Cytoplasmic.

It belongs to the SREBP family. As to quaternary structure, forms a tight complex with scap, the SCAP-SREBP complex, in the endoplasmic reticulum membrane. Homodimer; efficient DNA binding of the soluble transcription factor fragment requires dimerization with another bHLH protein. Post-translationally, processed in the Golgi apparatus, releasing the protein from the membrane. At low cholesterol the SCAP-SREBP complex is recruited into COPII vesicles for export from the endoplasmic reticulum. In the Golgi, complex SREBPs are cleaved sequentially by site-1 (mbtps1, S1P) and site-2 (mbtps2, S2P) protease. The first cleavage by site-1 protease occurs within the luminal loop, the second cleavage by site-2 protease occurs within the first transmembrane domain, releasing the transcription factor from the Golgi membrane.

It is found in the endoplasmic reticulum membrane. The protein localises to the golgi apparatus membrane. Its subcellular location is the cytoplasmic vesicle. The protein resides in the COPII-coated vesicle membrane. It localises to the nucleus. Precursor of the transcription factor form (Processed sterol regulatory element-binding protein 2), which is embedded in the endoplasmic reticulum membrane. Low sterol concentrations promote processing of this form, releasing the transcription factor form that translocates into the nucleus and activates transcription of genes involved in cholesterol biosynthesis. Its function is as follows. Key transcription factor that regulates expression of genes involved in cholesterol biosynthesis. Binds to the sterol regulatory element 1 (SRE-1) (5'-ATCACCCCAC-3'). Has dual sequence specificity binding to both an E-box motif (5'-ATCACGTGA-3') and to SRE-1 (5'-ATCACCCCAC-3'). Regulates transcription of genes related to cholesterol synthesis pathway. Activated by mediated cholesterol efflux, transactivates NOTCH and promotes hematopoietic stem and progenitor cell emergence. This is Sterol regulatory element-binding protein 2 from Danio rerio (Zebrafish).